A 573-amino-acid polypeptide reads, in one-letter code: Protein phosphatase EYA3 (573 aa).

At Met1 the chain carries N-acetylmethionine. Disordered regions lie at residues 1 to 46 (MEEE…LASN) and 236 to 296 (TYQS…DATS). Positions 20 to 46 (SGEQTISQVSNPDVSDQKPETSSLASN) are enriched in polar residues. Low complexity predominate over residues 254–271 (LSSGDPSTSPSLSQTTPS). Phosphoserine is present on residues Ser262 and Ser266. Catalysis depends on Asp309, which acts as the Nucleophile. 2 residues coordinate Mg(2+): Asp309 and Asp311. Asp311 (proton donor) is an active-site residue. Phosphoserine occurs at positions 438 and 472. Mg(2+) is bound at residue Asp537.

Belongs to the HAD-like hydrolase superfamily. EYA family. In terms of assembly, interacts with SIX1 and DACH1, and probably SIX2, SIX4, SIX5. Mg(2+) is required as a cofactor. In terms of processing, ser-266 phosphorylation is required for localization at sites of DNA damage and directing interaction with H2AX.

The protein resides in the cytoplasm. Its subcellular location is the nucleus. The enzyme catalyses O-phospho-L-tyrosyl-[protein] + H2O = L-tyrosyl-[protein] + phosphate. Its function is as follows. Tyrosine phosphatase that specifically dephosphorylates 'Tyr-142' of histone H2AX (H2AXY142ph). 'Tyr-142' phosphorylation of histone H2AX plays a central role in DNA repair and acts as a mark that distinguishes between apoptotic and repair responses to genotoxic stress. Promotes efficient DNA repair by dephosphorylating H2AX, promoting the recruitment of DNA repair complexes containing MDC1. Its function as histone phosphatase probably explains its role in transcription regulation during organogenesis. Coactivates SIX1, and seems to coactivate SIX2, SIX4 and SIX5. The repression of precursor cell proliferation in myoblasts by SIX1 is switched to activation through recruitment of EYA3 to the SIX1-DACH1 complex and seems to be dependent on EYA3 phosphatase activity. May be involved in development of the eye. This Homo sapiens (Human) protein is Protein phosphatase EYA3 (EYA3).